Reading from the N-terminus, the 468-residue chain is Tyrosine-protein phosphatase YopH (468 aa).

Residues 127–194 (ARGHVSSHSH…TVSPYGPEAR (68 aa)) are disordered. Residues 130 to 141 (HVSSHSHSALHA) are compositionally biased toward low complexity. The Tyrosine-protein phosphatase domain occupies 152–461 (SHLDPRTPPL…DVLIKLAEGQ (310 aa)). The active-site Phosphocysteine intermediate is Cys-403.

This sequence belongs to the protein-tyrosine phosphatase family. Non-receptor class subfamily.

The protein localises to the secreted. It carries out the reaction O-phospho-L-tyrosyl-[protein] + H2O = L-tyrosyl-[protein] + phosphate. Functionally, essential virulence determinant. This protein is a protein tyrosine phosphatase. The essential function of YopH in Yersinia pathogenesis is host-protein dephosphorylation. It contributes to the ability of the bacteria to resist phagocytosis by peritoneal macrophages. The polypeptide is Tyrosine-protein phosphatase YopH (yopH) (Yersinia pseudotuberculosis serotype I (strain IP32953)).